We begin with the raw amino-acid sequence, 119 residues long: Large ribosomal subunit protein uL24 (119 aa).

This sequence belongs to the universal ribosomal protein uL24 family. In terms of assembly, part of the 50S ribosomal subunit.

One of two assembly initiator proteins, it binds directly to the 5'-end of the 23S rRNA, where it nucleates assembly of the 50S subunit. Functionally, located at the polypeptide exit tunnel on the outside of the subunit. This chain is Large ribosomal subunit protein uL24, found in Saccharolobus solfataricus (strain ATCC 35092 / DSM 1617 / JCM 11322 / P2) (Sulfolobus solfataricus).